We begin with the raw amino-acid sequence, 262 residues long: TLC domain-containing protein 4-B (262 aa).

The next 6 helical transmembrane spans lie at 6–26 (PLTVFISVTSLAVFQFLFHVG), 53–73 (TVSSFHALVVGCFCLYILVYD), 90–110 (LNVAVTSGYLISDLLLIIYYW), 122–142 (HLAALYACYYVLGEGMLPYFG), 177–197 (GVLMTISFFIVRIAVIPIYYG), and 218–238 (AWIISSVSLDIMNVMWMIKIA). The TLC domain maps to 44 to 246 (RQKIEWNSRT…IAKGCYKVLY (203 aa)).

Belongs to the TLCD4 family.

Its subcellular location is the membrane. The chain is TLC domain-containing protein 4-B (tlcd4-b) from Xenopus laevis (African clawed frog).